The primary structure comprises 127 residues: NADPH-dependent 7-cyano-7-deazaguanine reductase (127 aa).

Cysteine 40 serves as the catalytic Thioimide intermediate. Aspartate 47 functions as the Proton donor in the catalytic mechanism. Substrate contacts are provided by residues 62-64 (VEL) and 81-82 (HE).

It belongs to the GTP cyclohydrolase I family. QueF type 1 subfamily.

The protein localises to the cytoplasm. It catalyses the reaction 7-aminomethyl-7-carbaguanine + 2 NADP(+) = 7-cyano-7-deazaguanine + 2 NADPH + 3 H(+). The protein operates within tRNA modification; tRNA-queuosine biosynthesis. In terms of biological role, catalyzes the NADPH-dependent reduction of 7-cyano-7-deazaguanine (preQ0) to 7-aminomethyl-7-deazaguanine (preQ1). The sequence is that of NADPH-dependent 7-cyano-7-deazaguanine reductase from Campylobacter jejuni (strain RM1221).